The primary structure comprises 234 residues: Leucyl/phenylalanyl-tRNA--protein transferase (234 aa).

The protein belongs to the L/F-transferase family.

It is found in the cytoplasm. The enzyme catalyses N-terminal L-lysyl-[protein] + L-leucyl-tRNA(Leu) = N-terminal L-leucyl-L-lysyl-[protein] + tRNA(Leu) + H(+). It carries out the reaction N-terminal L-arginyl-[protein] + L-leucyl-tRNA(Leu) = N-terminal L-leucyl-L-arginyl-[protein] + tRNA(Leu) + H(+). The catalysed reaction is L-phenylalanyl-tRNA(Phe) + an N-terminal L-alpha-aminoacyl-[protein] = an N-terminal L-phenylalanyl-L-alpha-aminoacyl-[protein] + tRNA(Phe). Its function is as follows. Functions in the N-end rule pathway of protein degradation where it conjugates Leu, Phe and, less efficiently, Met from aminoacyl-tRNAs to the N-termini of proteins containing an N-terminal arginine or lysine. In Salmonella agona (strain SL483), this protein is Leucyl/phenylalanyl-tRNA--protein transferase.